Reading from the N-terminus, the 277-residue chain is Ribosomal RNA small subunit methyltransferase A (277 aa).

S-adenosyl-L-methionine-binding residues include Asn-27, Leu-29, Gly-54, Glu-75, Asp-95, and Asn-118.

It belongs to the class I-like SAM-binding methyltransferase superfamily. rRNA adenine N(6)-methyltransferase family. RsmA subfamily.

It localises to the cytoplasm. The catalysed reaction is adenosine(1518)/adenosine(1519) in 16S rRNA + 4 S-adenosyl-L-methionine = N(6)-dimethyladenosine(1518)/N(6)-dimethyladenosine(1519) in 16S rRNA + 4 S-adenosyl-L-homocysteine + 4 H(+). In terms of biological role, specifically dimethylates two adjacent adenosines (A1518 and A1519) in the loop of a conserved hairpin near the 3'-end of 16S rRNA in the 30S particle. May play a critical role in biogenesis of 30S subunits. This chain is Ribosomal RNA small subunit methyltransferase A, found in Chlamydia muridarum (strain MoPn / Nigg).